Consider the following 201-residue polypeptide: Protein lin-7 homolog B (201 aa).

Positions 1–13 (MAALVEPLGLERE) match the Kinase interacting site motif. The L27 domain occupies 10–65 (LEREVSRAVELLERLQRSGELPPQKLQALQRVLQSRFCSAIREVYEQLYDTLDITG). A PDZ domain is found at 93 to 175 (VVELPKTDEG…SVKLVVRYTP (83 aa)).

It belongs to the lin-7 family. In terms of assembly, forms a complex with CASK and CASKIN1. Component of the brain-specific heterotrimeric complex (LIN-10-LIN-2-LIN-7 complex) composed of at least APBA1, CASK, and LIN7, which associates with the motor protein KIF17 to transport vesicles along microtubules. Forms a heterotrimeric complex composed of MMP5, LIN7B and PATJ; the N-terminal L27 domain of PALS1 interacts with the L27 domain of PATJ and the C-terminal L27 domain of PALS1 interacts with the L27 domain of LIN7B. Forms a heterotrimeric complex with DLG1 and CASK via their L27 domains. Interacts with DLG4 and GRIN2B as well as CDH1 and CTNNB1, the channels KCNJ12/Kir2.2, KCNJ4/Kir2.3 and probably KCNJ2/Kir2.1 and SLC6A12/BGT-1 via its PDZ domain. The association of LIN7A with cadherin and beta-catenin is calcium-dependent, occurs at synaptic junctions and requires the actin cytoskeleton. Interacts with EGFR, ERBB2, ERBB3 and ERBB4 with both PDZ and KID domains. Interacts with ASIC3. Interacts with TOPK. Interacts with RTKN. Associates with KIF17 via APBA1. Interacts with APBA1. Interacts with MPP7. Interacts with DLG2. Interacts with DLG3.

Its subcellular location is the cell membrane. The protein localises to the basolateral cell membrane. The protein resides in the cell junction. It localises to the postsynaptic density membrane. It is found in the tight junction. In terms of biological role, plays a role in establishing and maintaining the asymmetric distribution of channels and receptors at the plasma membrane of polarized cells. Forms membrane-associated multiprotein complexes that may regulate delivery and recycling of proteins to the correct membrane domains. The tripartite complex composed of LIN7 (LIN7A, LIN7B or LIN7C), CASK and APBA1 associates with the motor protein KIF17 to transport vesicles containing N-methyl-D-aspartate (NMDA) receptor subunit NR2B along microtubules. This complex may have the potential to couple synaptic vesicle exocytosis to cell adhesion in brain. Ensures the proper localization of GRIN2B (subunit 2B of the NMDA receptor) to neuronal postsynaptic density and may function in localizing synaptic vesicles at synapses where it is recruited by beta-catenin and cadherin. Required to localize Kir2 channels, GABA transporter (SLC6A12) and EGFR/ERBB1, ERBB2, ERBB3 and ERBB4 to the basolateral membrane of epithelial cells. May increase the amplitude of ASIC3 acid-evoked currents by stabilizing the channel at the cell surface. The protein is Protein lin-7 homolog B (LIN7B) of Bos taurus (Bovine).